The sequence spans 579 residues: Carotenoid-cleaving dioxygenase, mitochondrial (579 aa).

4 residues coordinate Fe cation: histidine 226, histidine 286, histidine 357, and histidine 573.

This sequence belongs to the carotenoid oxygenase family. The cofactor is Fe(2+). In terms of tissue distribution, highly expressed in retinal pigment epithelium. Also expressed in stomach, small intestine, liver, testis, kidney, adrenal gland, pancreas, heart, skeletal muscle and prostate (at protein level).

The protein resides in the mitochondrion. It carries out the reaction all-trans-beta-carotene + O2 = beta-ionone + all-trans-10'-apo-beta-carotenal. The catalysed reaction is 5-cis-lycopene + O2 = 5-cis-10'-apo-lycopenal + (3E,5E)-6,10-dimethylundeca-3,5,9-trien-2-one. The enzyme catalyses 13-cis-lycopene + O2 = 13-cis-10'-apo-lycopenal + (3E,5E)-6,10-dimethylundeca-3,5,9-trien-2-one. It catalyses the reaction lutein + O2 = (3R,6R)-hydroxy-alpha-ionone + (3R)-3-hydroxy-10'-apo-beta-carotenal. It carries out the reaction lutein + O2 = (3R,6R)-3-hydroxy-10'-apo-alpha-carotenal + (3R)-hydroxy-beta-ionone. The catalysed reaction is all-trans-zeaxanthin + 2 O2 = 4,9-dimethyldodeca-2,4,6,8,10-pentaenedial + 2 (3R)-hydroxy-beta-ionone. The enzyme catalyses all-trans-zeaxanthin + O2 = (3R)-3-hydroxy-10'-apo-beta-carotenal + (3R)-hydroxy-beta-ionone. It catalyses the reaction beta-cryptoxanthin + O2 = all-trans-10'-apo-beta-carotenal + (3R)-hydroxy-beta-ionone. It carries out the reaction all-trans-10'-apo-beta-carotenal + O2 = beta-ionone + 4,9-dimethyldodeca-2,4,6,8,10-pentaenedial. The catalysed reaction is (3R)-3-hydroxy-10'-apo-beta-carotenal + O2 = 4,9-dimethyldodeca-2,4,6,8,10-pentaenedial + (3R)-hydroxy-beta-ionone. The enzyme catalyses (3R,6R)-3-hydroxy-10'-apo-alpha-carotenal + O2 = (3R,6R)-hydroxy-alpha-ionone + 4,9-dimethyldodeca-2,4,6,8,10-pentaenedial. In terms of biological role, broad specificity mitochondrial dioxygenase that mediates the asymmetric oxidative cleavage of carotenoids. Cleaves carotenes (pure hydrocarbon carotenoids) such as all-trans-beta-carotene and lycopene as well as xanthophylls (oxygenated carotenoids) such as zeaxanthin, lutein and beta-cryptoxanthin at both the 9,10 and the 9',10' carbon-carbon double bond. Through its function in carotenoids metabolism regulates oxidative stress and the production of important signaling molecules. The polypeptide is Carotenoid-cleaving dioxygenase, mitochondrial (Homo sapiens (Human)).